A 124-amino-acid polypeptide reads, in one-letter code: Urocortin (124 aa).

Positions 1–25 (MRQAGRAALLAALLLLVQLCPGSSQ) are cleaved as a signal peptide. Residues 23–46 (SSQRSPEAAGVQDPSLRWSPGARN) form a disordered region. The propeptide occupies 26-82 (RSPEAAGVQDPSLRWSPGARNQGGGARALLLLLAERFPRRAGPGRLGLGTAGERPRR). Val-122 is subject to Valine amide.

Belongs to the sauvagine/corticotropin-releasing factor/urotensin I family. As to quaternary structure, interacts with CRHR1 and CRHR2 (via their N-terminal extracellular domain). As to expression, keratinocytes in epidermis and the outer and inner root sheaths of hair follicles, epithelium of sebaceous and sweat glands, erector pili muscle, cutaneous blood vessel walls, cutaneous nerves and dermal mononuclear cells. Detected in plasma cells in the lamia propria in colon mucosa (at protein level). Expressed in pituitary and adrenal glands. Detected in plasma cells in the lamia propria in colon mucosa.

It is found in the secreted. In terms of biological role, acts in vitro to stimulate the secretion of adrenocorticotropic hormone (ACTH). Binds with high affinity to CRF receptor types 1, 2-alpha, and 2-beta. Plays a role in the establishment of normal hearing thresholds. Reduces food intake and regulates ghrelin levels in gastric body and plasma. The polypeptide is Urocortin (UCN) (Homo sapiens (Human)).